The chain runs to 979 residues: Zinc finger protein 280D (979 aa).

Glycyl lysine isopeptide (Lys-Gly) (interchain with G-Cter in SUMO2) cross-links involve residues Lys-32, Lys-34, Lys-74, and Lys-87. A compositionally biased stretch (polar residues) spans Thr-89–Val-101. Residues Thr-89–Val-119 form a disordered region. A Phosphoserine modification is found at Ser-104. Glycyl lysine isopeptide (Lys-Gly) (interchain with G-Cter in SUMO2) cross-links involve residues Lys-126 and Lys-140. Residues Tyr-157–Thr-236 form a disordered region. Residues Ser-169 to Asn-187 show a composition bias toward polar residues. Residues Lys-189, Lys-210, Lys-223, Lys-233, Lys-275, Lys-284, and Lys-292 each participate in a glycyl lysine isopeptide (Lys-Gly) (interchain with G-Cter in SUMO2) cross-link. The span at Glu-195–Gly-235 shows a compositional bias: polar residues. 2 C2H2-type zinc fingers span residues Phe-321 to His-343 and Thr-358 to His-381. Residues Thr-388–Lys-412 form a C2H2-type 3; degenerate zinc finger. C2H2-type zinc fingers lie at residues Tyr-418–His-441 and Cys-449–His-469. 3 disordered regions span residues Gly-523 to Ser-608, Leu-739 to Glu-809, and Phe-896 to Ser-979. A compositionally biased stretch (low complexity) spans Ser-527–Thr-541. 2 stretches are compositionally biased toward polar residues: residues Leu-542 to Lys-584 and Ser-592 to Ser-608. Position 545 is a phosphoserine (Ser-545). Lys-550 is covalently cross-linked (Glycyl lysine isopeptide (Lys-Gly) (interchain with G-Cter in SUMO2)). Basic and acidic residues predominate over residues Leu-739 to Asn-784. Lys-740 is covalently cross-linked (Glycyl lysine isopeptide (Lys-Gly) (interchain with G-Cter in SUMO2)). Positions Cys-786–Thr-797 are enriched in polar residues. Positions Lys-798–Glu-809 are enriched in basic and acidic residues. Residues Ser-905–Gly-914 show a composition bias toward polar residues. 2 positions are modified to phosphoserine: Ser-908 and Ser-911. Acidic residues predominate over residues Val-970–Ser-979. Lys-976 is covalently cross-linked (Glycyl lysine isopeptide (Lys-Gly) (interchain with G-Cter in SUMO2)).

The protein resides in the nucleus. Its function is as follows. May function as a transcription factor. This is Zinc finger protein 280D (ZNF280D) from Homo sapiens (Human).